The sequence spans 433 residues: uncharacterized protein (433 aa).

Residues Met-1–Glu-59 enclose the TRAM domain. [4Fe-4S] cluster-binding residues include Cys-72, Cys-80, Cys-83, and Cys-168. Gln-262, Tyr-291, Glu-315, and Asp-359 together coordinate S-adenosyl-L-methionine. Cys-386 functions as the Nucleophile in the catalytic mechanism.

This sequence belongs to the class I-like SAM-binding methyltransferase superfamily. RNA M5U methyltransferase family.

This is an uncharacterized protein from Streptomyces avermitilis (strain ATCC 31267 / DSM 46492 / JCM 5070 / NBRC 14893 / NCIMB 12804 / NRRL 8165 / MA-4680).